The sequence spans 445 residues: Inward rectifier potassium channel 4 (445 aa).

Residues methionine 1–tryptophan 55 are Cytoplasmic-facing. The helical transmembrane segment at arginine 56–isoleucine 80 threads the bilayer. Topologically, residues alanine 81–glycine 119 are extracellular. Residues phenylalanine 120–glutamine 131 constitute an intramembrane region (helical; Pore-forming). Positions threonine 132–phenylalanine 138 form an intramembrane region, pore-forming. The Selectivity filter signature appears at threonine 133–phenylalanine 138. The Extracellular portion of the chain corresponds to arginine 139 to leucine 147. Residues alanine 148–threonine 169 traverse the membrane as a helical segment. At isoleucine 170–isoleucine 445 the chain is on the cytoplasmic side. Residues serine 443 to isoleucine 445 carry the PDZ-binding motif.

This sequence belongs to the inward rectifier-type potassium channel (TC 1.A.2.1) family. KCNJ4 subfamily. As to quaternary structure, homomultimeric and heteromultimeric association with KCNJ2 and KCNJ12. Interacts with DLG2 and DLG4. Associates, via its PDZ-recognition domain, with a complex containing LIN7A, LIN7B, LIN7C, DLG1, CASK and APBA1. Interacts with TAX1BP3. TAX1BP3 competes with LIN7 family members for KCNJ4 binding. In terms of tissue distribution, highly expressed in the forebrain, moderately in skeletal muscle. Im olfactory bulb, specifically expressed at the postsynaptic membrane of dendritic spines of granule cells.

It localises to the cell membrane. It is found in the postsynaptic cell membrane. The protein resides in the cytoplasmic vesicle membrane. The catalysed reaction is K(+)(in) = K(+)(out). Its function is as follows. Inward rectifier potassium channels are characterized by a greater tendency to allow potassium to flow into the cell rather than out of it. Their voltage dependence is regulated by the concentration of extracellular potassium; as external potassium is raised, the voltage range of the channel opening shifts to more positive voltages. The inward rectification is mainly due to the blockage of outward current by internal magnesium. Can be blocked by extracellular barium and cesium. In Mus musculus (Mouse), this protein is Inward rectifier potassium channel 4 (Kcnj4).